The following is a 131-amino-acid chain: Peptide methionine sulfoxide reductase MsrB (131 aa).

The region spanning 8–130 (LEEWKQMLDP…NSVCLDLVPR (123 aa)) is the MsrB domain. Positions 47, 50, 96, and 99 each coordinate Zn(2+). The active-site Nucleophile is Cys119.

It belongs to the MsrB Met sulfoxide reductase family. Zn(2+) is required as a cofactor.

It catalyses the reaction L-methionyl-[protein] + [thioredoxin]-disulfide + H2O = L-methionyl-(R)-S-oxide-[protein] + [thioredoxin]-dithiol. The polypeptide is Peptide methionine sulfoxide reductase MsrB (Pseudomonas syringae pv. syringae (strain B728a)).